The chain runs to 510 residues: AAA-ATPase At3g28540 (510 aa).

Residues 7–25 (LFGFTGTTMASLMFFWSVY) form a helical membrane-spanning segment. Residue 246–253 (GPPGTGKS) coordinates ATP. Residues 460-510 (KEKAKKLAEEEKMKKAARDARRIKKKAEEEHKKKNKVEENGDVSHDNGNHI) form a disordered region.

It belongs to the AAA ATPase family. BCS1 subfamily. Mg(2+) is required as a cofactor.

It is found in the membrane. The enzyme catalyses ATP + H2O = ADP + phosphate + H(+). The sequence is that of AAA-ATPase At3g28540 from Arabidopsis thaliana (Mouse-ear cress).